A 502-amino-acid polypeptide reads, in one-letter code: Cytochrome P450 81D1 (502 aa).

A helical membrane pass occupies residues 6 to 26 (IRVVLYSIFSLIFLIISFKFL). Heme is bound at residue Cys-440.

It belongs to the cytochrome P450 family. Heme serves as cofactor.

It is found in the membrane. This is Cytochrome P450 81D1 (CYP81D1) from Arabidopsis thaliana (Mouse-ear cress).